Consider the following 234-residue polypeptide: Ubiquinone biosynthesis O-methyltransferase (234 aa).

S-adenosyl-L-methionine-binding residues include arginine 40, glycine 59, aspartate 80, and methionine 123.

Belongs to the methyltransferase superfamily. UbiG/COQ3 family.

It catalyses the reaction a 3-demethylubiquinol + S-adenosyl-L-methionine = a ubiquinol + S-adenosyl-L-homocysteine + H(+). The enzyme catalyses a 3-(all-trans-polyprenyl)benzene-1,2-diol + S-adenosyl-L-methionine = a 2-methoxy-6-(all-trans-polyprenyl)phenol + S-adenosyl-L-homocysteine + H(+). It participates in cofactor biosynthesis; ubiquinone biosynthesis. O-methyltransferase that catalyzes the 2 O-methylation steps in the ubiquinone biosynthetic pathway. In Coxiella burnetii (strain Dugway 5J108-111), this protein is Ubiquinone biosynthesis O-methyltransferase.